Reading from the N-terminus, the 832-residue chain is DNA polymerase I, thermostable (832 aa).

The region spanning 175-260 is the 5'-3' exonuclease domain; sequence RPDQWADYRA…DLPLEVDFAK (86 aa). A polymerase region spans residues 410–832; it reads ERLFANLWGR…IGEDWLSAKE (423 aa).

This sequence belongs to the DNA polymerase type-A family.

It carries out the reaction DNA(n) + a 2'-deoxyribonucleoside 5'-triphosphate = DNA(n+1) + diphosphate. In addition to polymerase activity, this DNA polymerase exhibits 5'-3' exonuclease activity. Unlikely to have 3'-5' exonuclease activity due to absence of a 3'-5' exonuclease domain. This is DNA polymerase I, thermostable (polA) from Thermus aquaticus.